An 82-amino-acid polypeptide reads, in one-letter code: uncharacterized protein (82 aa).

This is an uncharacterized protein from Human herpesvirus 6A (strain Uganda-1102) (HHV-6 variant A).